The sequence spans 174 residues: uncharacterized protein (174 aa).

The tract at residues 1–55 is disordered; it reads MGCVVSKSDDIKNENESRQRNQASSSQQPSSSQTPSKQIGIAAKDSEEQPQEVSY. Gly2 carries the N-myristoyl glycine lipid modification. A compositionally biased stretch (basic and acidic residues) spans 7–19; sequence KSDDIKNENESRQ. Over residues 20–38 the composition is skewed to low complexity; that stretch reads RNQASSSQQPSSSQTPSKQ.

This is an uncharacterized protein from Dictyostelium discoideum (Social amoeba).